The primary structure comprises 155 residues: Ribosomal RNA large subunit methyltransferase H (155 aa).

Residues leucine 72, glycine 103, and 122 to 127 (LSALTL) each bind S-adenosyl-L-methionine.

Belongs to the RNA methyltransferase RlmH family. As to quaternary structure, homodimer.

It localises to the cytoplasm. It catalyses the reaction pseudouridine(1915) in 23S rRNA + S-adenosyl-L-methionine = N(3)-methylpseudouridine(1915) in 23S rRNA + S-adenosyl-L-homocysteine + H(+). In terms of biological role, specifically methylates the pseudouridine at position 1915 (m3Psi1915) in 23S rRNA. This is Ribosomal RNA large subunit methyltransferase H from Cronobacter sakazakii (strain ATCC BAA-894) (Enterobacter sakazakii).